Here is a 1876-residue protein sequence, read N- to C-terminus: Phenolphthiocerol/phthiocerol polyketide synthase subunit A (1876 aa).

The region spanning 9 to 83 (ADLRHWLIDY…ALAAYLAAPE (75 aa)) is the Carrier 1 domain. O-(pantetheine 4'-phosphoryl)serine is present on Ser43. The Ketosynthase family 3 (KS3) domain maps to 101–526 (DEPIAVVGMG…GTNAHVVIEQ (426 aa)). Active-site for beta-ketoacyl synthase activity residues include Cys273, His408, and His448. The tract at residues 624–950 (EGSPGPGTVF…NLNKAHTIHP (327 aa)) is acyltransferase. Ser720 acts as the For malonyltransferase activity in catalysis. Residues 997-1112 (HTTVATVSAS…AQLSSSPSDS (116 aa)) are N-terminal hotdog fold. The PKS/mFAS DH domain maps to 997-1267 (HTTVATVSAS…YRALDFGLDV (271 aa)). The Proton acceptor; for dehydratase activity role is filled by His1027. The segment at 1104–1130 (QLSSSPSDSASSLNEHHRANGQPPERA) is disordered. Residues 1106 to 1115 (SSSPSDSASS) show a composition bias toward low complexity. The interval 1130-1267 (AHRDLIPDLA…YRALDFGLDV (138 aa)) is C-terminal hotdog fold. Residue Asp1186 is the Proton donor; for dehydratase activity of the active site. A beta-ketoacyl reductase region spans residues 1491 to 1728 (AAYLITGGLG…DGYDVAQAVV (238 aa)). 1492–1551 (AYLITGGLGALGLLMADWLADRGAHRLVLTGRTPLPPRRDWQLDTLDTELRRRIDAIRAL) lines the NADP(+) pocket. A Carrier 2 domain is found at 1759 to 1836 (EVRSELEQGL…SLASYLAKRV (78 aa)). Ser1796 is modified (O-(pantetheine 4'-phosphoryl)serine).

NADP(+) serves as cofactor. It depends on pantetheine 4'-phosphate as a cofactor.

It catalyses the reaction icosanoyl-[(phenol)carboxyphthiodiolenone synthase] + 2 (S)-methylmalonyl-CoA + 3 malonyl-CoA + 5 NADPH + 10 H(+) = C32-carboxyphthiodiolenone-[(phenol)carboxyphthiodiolenone synthase] + 5 CO2 + 5 NADP(+) + 5 CoA + 2 H2O. The catalysed reaction is docosanoyl-[(phenol)carboxyphthiodiolenone synthase] + 2 (S)-methylmalonyl-CoA + 3 malonyl-CoA + 5 NADPH + 10 H(+) = C34-carboxyphthiodiolenone-[(phenol)carboxyphthiodiolenone synthase] + 5 CO2 + 5 NADP(+) + 5 CoA + 2 H2O. The enzyme catalyses 17-(4-hydroxyphenyl)heptadecanoyl-[(phenol)carboxyphthiodiolenone synthase] + 2 (S)-methylmalonyl-CoA + 3 malonyl-CoA + 5 NADPH + 10 H(+) = C35-(phenol)carboxyphthiodiolenone-[(phenol)carboxyphthiodiolenone synthase] + 5 CO2 + 5 NADP(+) + 5 CoA + 2 H2O. It carries out the reaction 19-(4-hydroxyphenyl)nonadecanoyl-[(phenol)carboxyphthiodiolenone synthase] + 2 (S)-methylmalonyl-CoA + 3 malonyl-CoA + 5 NADPH + 10 H(+) = C37-(phenol)carboxyphthiodiolenone-[(phenol)carboxyphthiodiolenone synthase] + 5 CO2 + 5 NADP(+) + 5 CoA + 2 H2O. Its pathway is lipid metabolism; fatty acid biosynthesis. Part of the PpsABCDE complex involved in the biosynthesis of the lipid core common to phthiocerols and phenolphthiocerols by successive additions of malonyl-CoA or methylmalonyl-CoA extender units. PpsA can accept as substrate the activated forms of either icosanoyl (C20), docosanoyl (C22) or lignoceroyl (C24) groups from FadD26, or a (4-hydroxyphenyl)-C17 or (4-hydroxyphenyl)-C19 fatty acyl from FadD29. PpsA initiates the biosynthesis and extends its substrate using a malonyl-CoA extender unit. The PpsB and PpsC proteins add the second and third malonyl-CoA extender units. PpsD adds an (R)-methylmalonyl unit and PpsE adds a second (R)-methylmalonyl unit. The incorporation of the methylmalonyl units results in formation of two branched methyl groups in the elongated product. This Mycobacterium bovis (strain ATCC BAA-935 / AF2122/97) protein is Phenolphthiocerol/phthiocerol polyketide synthase subunit A (ppsA).